The primary structure comprises 239 residues: Succinate dehydrogenase [ubiquinone] iron-sulfur subunit (239 aa).

Residues 24–99 enclose the 2Fe-2S ferredoxin-type domain; it reads AEAKFSVHPI…NANIITIYPL (76 aa). [2Fe-2S] cluster is bound by residues cysteine 63, cysteine 68, cysteine 71, and cysteine 83. In terms of domain architecture, 4Fe-4S ferredoxin-type spans 142 to 172; sequence DRSELNGIYECILCACCSASCPSYWWNHDKY. [4Fe-4S] cluster is bound by residues cysteine 152, cysteine 155, and cysteine 158. Cysteine 162 is a [3Fe-4S] cluster binding site. Tryptophan 167 serves as a coordination point for a ubiquinone. Residues cysteine 209 and cysteine 215 each coordinate [3Fe-4S] cluster. A [4Fe-4S] cluster-binding site is contributed by cysteine 219.

Belongs to the succinate dehydrogenase/fumarate reductase iron-sulfur protein family. Component of complex II composed of four subunits: a flavoprotein (FP), an iron-sulfur protein (IP), and a cytochrome b composed of a large and a small subunit. The cofactor is [2Fe-2S] cluster. It depends on [3Fe-4S] cluster as a cofactor. [4Fe-4S] cluster is required as a cofactor.

Its subcellular location is the mitochondrion inner membrane. The catalysed reaction is a quinone + succinate = fumarate + a quinol. Its pathway is carbohydrate metabolism; tricarboxylic acid cycle; fumarate from succinate (eukaryal route): step 1/1. Its function is as follows. Iron-sulfur protein (IP) subunit of succinate dehydrogenase (SDH) that is involved in complex II of the mitochondrial electron transport chain and is responsible for transferring electrons from succinate to ubiquinone (coenzyme Q). This is Succinate dehydrogenase [ubiquinone] iron-sulfur subunit (SDH2) from Porphyra purpurea (Red seaweed).